The chain runs to 257 residues: 1-(5-phosphoribosyl)-5-[(5-phosphoribosylamino)methylideneamino] imidazole-4-carboxamide isomerase (257 aa).

Asp8 (proton acceptor) is an active-site residue. The active-site Proton donor is the Asp129.

It belongs to the HisA/HisF family.

It localises to the cytoplasm. The catalysed reaction is 1-(5-phospho-beta-D-ribosyl)-5-[(5-phospho-beta-D-ribosylamino)methylideneamino]imidazole-4-carboxamide = 5-[(5-phospho-1-deoxy-D-ribulos-1-ylimino)methylamino]-1-(5-phospho-beta-D-ribosyl)imidazole-4-carboxamide. It participates in amino-acid biosynthesis; L-histidine biosynthesis; L-histidine from 5-phospho-alpha-D-ribose 1-diphosphate: step 4/9. The protein is 1-(5-phosphoribosyl)-5-[(5-phosphoribosylamino)methylideneamino] imidazole-4-carboxamide isomerase of Thermosynechococcus vestitus (strain NIES-2133 / IAM M-273 / BP-1).